A 119-amino-acid chain; its full sequence is U-scoloptoxin(16)-Er11a (119 aa).

An N-terminal signal peptide occupies residues 1-19; sequence MKSWTAAVLSLGLIYLSIS.

It belongs to the scoloptoxin-16 family. Contains 4 disulfide bonds. In terms of tissue distribution, expressed by the venom gland.

The protein resides in the secreted. This chain is U-scoloptoxin(16)-Er11a, found in Ethmostigmus rubripes (Giant centipede).